The primary structure comprises 328 residues: Mitochondrial GTPase 1 (328 aa).

In terms of domain architecture, CP-type G spans 10–199 (KTTLKRLRDS…MVDTPGIMLP (190 aa)). Residues 57-60 (NKCD), 143-148 (NVGKSS), and glycine 195 each bind GTP.

Belongs to the TRAFAC class YlqF/YawG GTPase family. MTG1 subfamily.

It is found in the mitochondrion inner membrane. Mitochondrial GTPase involved in assembly of the large ribosomal subunit. Plays a role in expression of the mitochondrial translational machinery. The protein is Mitochondrial GTPase 1 of Schizosaccharomyces japonicus (strain yFS275 / FY16936) (Fission yeast).